The chain runs to 275 residues: 2,3,4,5-tetrahydropyridine-2,6-dicarboxylate N-succinyltransferase (275 aa).

Residues R104 and D141 each coordinate substrate.

This sequence belongs to the transferase hexapeptide repeat family. In terms of assembly, homotrimer.

The protein localises to the cytoplasm. The enzyme catalyses (S)-2,3,4,5-tetrahydrodipicolinate + succinyl-CoA + H2O = (S)-2-succinylamino-6-oxoheptanedioate + CoA. The protein operates within amino-acid biosynthesis; L-lysine biosynthesis via DAP pathway; LL-2,6-diaminopimelate from (S)-tetrahydrodipicolinate (succinylase route): step 1/3. The polypeptide is 2,3,4,5-tetrahydropyridine-2,6-dicarboxylate N-succinyltransferase (Aeromonas hydrophila subsp. hydrophila (strain ATCC 7966 / DSM 30187 / BCRC 13018 / CCUG 14551 / JCM 1027 / KCTC 2358 / NCIMB 9240 / NCTC 8049)).